The following is a 298-amino-acid chain: Ornithine carbamoyltransferase (298 aa).

Carbamoyl phosphate is bound by residues 50–53, Q77, R101, and 128–131; these read STRT and HPCQ. L-ornithine-binding positions include N159, D216, and 220-221; that span reads SM. Carbamoyl phosphate-binding positions include 256–257 and R284; that span reads CL.

Belongs to the aspartate/ornithine carbamoyltransferase superfamily. OTCase family.

It localises to the cytoplasm. The enzyme catalyses carbamoyl phosphate + L-ornithine = L-citrulline + phosphate + H(+). The protein operates within amino-acid biosynthesis; L-arginine biosynthesis; L-arginine from L-ornithine and carbamoyl phosphate: step 1/3. Its function is as follows. Reversibly catalyzes the transfer of the carbamoyl group from carbamoyl phosphate (CP) to the N(epsilon) atom of ornithine (ORN) to produce L-citrulline. This chain is Ornithine carbamoyltransferase, found in Methylococcus capsulatus (strain ATCC 33009 / NCIMB 11132 / Bath).